Consider the following 430-residue polypeptide: MSSIVAIKGFNDVLPTQTAAWRRLEQHLASLMDAYGYQQIRLPIVEQTGLFKRAIGDATDIVEKEMYTFFDKGNPPESLTLRPEGTAGCVRALVEHNLLRGATPRVWYMGPMFRYEKPQKGRYRQFHQFGVETFGVATPDIDAELIMLTARLWKRMGVDHMVQLELNTLGETDERTEYRNALVAFLNEHKDALDEDSQRRLTTNPLRILDSKIESTQKILENAPKLHDFLKEDSLSHFQQLQDYLTAAGIKFVINQKLVRGLDYYNKTVFEWTTTALGSQGTVCAGGRYDGLVGQLKGKADQSVPAVGFAMGMERLLLLLEQVEQAEIVRHCEAFLVAEPAYQSKALVLAEQLRDQLEAANSNIRIKTGSQSSMKSQMKKADQAGAVYAIILGEREWEAQQLAVKELATAEQSQVALAELVPFLIEKFTK.

Belongs to the class-II aminoacyl-tRNA synthetase family. As to quaternary structure, homodimer.

The protein localises to the cytoplasm. It carries out the reaction tRNA(His) + L-histidine + ATP = L-histidyl-tRNA(His) + AMP + diphosphate + H(+). The polypeptide is Histidine--tRNA ligase (Acinetobacter baumannii (strain SDF)).